The primary structure comprises 317 residues: R-phycoerythrin gamma chain, chloroplastic (317 aa).

The transit peptide at 1-40 (MASPAFAVNGMFTPVKLSGSFTASMPVDSKPAASATGVRM) directs the protein to the chloroplast. Positions 94 and 133 each coordinate phycourobilin. C210 is a binding site for (2R,3E)-phycoerythrobilin. Residue C297 coordinates phycourobilin.

Heteromer of 1 alpha, 1 beta and 2 gamma chains. Contains four covalently linked bilin chromophores.

Its subcellular location is the plastid. It localises to the chloroplast thylakoid membrane. Critical for the incorporation of phycoerythrin in the phycobilisome complex. This Aglaothamnion neglectum (Red alga) protein is R-phycoerythrin gamma chain, chloroplastic.